Here is a 254-residue protein sequence, read N- to C-terminus: Mediator of RNA polymerase II transcription subunit 4 (254 aa).

Residues 72-114 (RVHQEMQSLEKEVEKRDSDIQQLQKQLKEAEHILATAVYQAKE) adopt a coiled-coil conformation. The segment at 215–254 (ILPPHHGNDFGLEPPGHNKENEDDVEAMSTDSSSSSSDSD) is disordered. Residues 243 to 254 (STDSSSSSSDSD) are compositionally biased toward low complexity.

Belongs to the Mediator complex subunit 4 family. Component of the Mediator complex.

Its subcellular location is the nucleus. In terms of biological role, component of the Mediator complex, a coactivator involved in the regulated transcription of nearly all RNA polymerase II-dependent genes. Mediator functions as a bridge to convey information from gene-specific regulatory proteins to the basal RNA polymerase II transcription machinery. Mediator is recruited to promoters by direct interactions with regulatory proteins and serves as a scaffold for the assembly of a functional preinitiation complex with RNA polymerase II and the general transcription factors. This Danio rerio (Zebrafish) protein is Mediator of RNA polymerase II transcription subunit 4 (med4).